Consider the following 260-residue polypeptide: Intermembrane phospholipid transport system permease protein MlaE (260 aa).

Residues 1–50 are Cytoplasmic-facing; it reads MLLNALASLGHKGIKTLRTFGRAGLMLFNALVGKPEFRKHAPLLVRQLYN. The helical transmembrane segment at 51–71 threads the bilayer; that stretch reads VGVLSMLIIVVSGVFIGMVLG. Topologically, residues 72–88 are periplasmic; it reads LQGYLVLTTYSAETSLG. A helical transmembrane segment spans residues 89–109; sequence MLVALSLLRELGPVVAALLFA. The Cytoplasmic portion of the chain corresponds to 110–147; sequence GRAGSALTAEIGLMRATEQLSSMEMMAVDPLRRVISPR. The chain crosses the membrane as a helical span at residues 148 to 168; sequence FWAGVISLPLLTVIFVAVGIW. At 169 to 198 the chain is on the periplasmic side; sequence GGSLVGVSWKGIDSGFFWSAMQNAVDWRMD. Residues 199–219 traverse the membrane as a helical segment; the sequence is LVNCLIKSVVFAITVTWISLF. Topologically, residues 220–238 are cytoplasmic; sequence NGYDAIPTSAGISRATTRT. A helical membrane pass occupies residues 239-259; sequence VVHSSLAVLGLDFVLTALMFG. A topological domain (periplasmic) is located at residue Asn-260.

It belongs to the MlaE permease family. As to quaternary structure, the complex is composed of two ATP-binding proteins (MlaF), two transmembrane proteins (MlaE), two cytoplasmic solute-binding proteins (MlaB) and six periplasmic solute-binding proteins (MlaD).

Its subcellular location is the cell inner membrane. Its function is as follows. Part of the ABC transporter complex MlaFEDB, which is involved in a phospholipid transport pathway that maintains lipid asymmetry in the outer membrane by retrograde trafficking of phospholipids from the outer membrane to the inner membrane. Probably responsible for the translocation of the substrate across the membrane. This is Intermembrane phospholipid transport system permease protein MlaE from Escherichia coli O157:H7.